The chain runs to 373 residues: Probable jasmonic acid carboxyl methyltransferase 2 (373 aa).

Residue Tyr-18 participates in S-adenosyl-L-homocysteine binding. Gln-25 lines the jasmonate pocket. Residues Cys-59, Asn-64, Asp-96, Leu-97, Ser-135, and Phe-136 each contribute to the S-adenosyl-L-homocysteine site. 2 residues coordinate jasmonate: His-156 and Trp-157. Mg(2+) is bound by residues Asn-174, Asp-260, Phe-262, and Asn-263.

It belongs to the methyltransferase superfamily. Type-7 methyltransferase family. The cofactor is Mg(2+).

The protein localises to the cytoplasm. It is found in the nucleus. The enzyme catalyses jasmonate + S-adenosyl-L-methionine = methyl (-)-jasmonate + S-adenosyl-L-homocysteine. It participates in lipid metabolism; oxylipin biosynthesis. Functionally, catalyzes the methylation of jasmonate into methyljasmonate, a plant volatile that acts as an important cellular regulator mediating diverse developmental processes and defense responses. This chain is Probable jasmonic acid carboxyl methyltransferase 2, found in Theobroma cacao (Cacao).